Consider the following 183-residue polypeptide: Large ribosomal subunit protein uL6 (183 aa).

The protein belongs to the universal ribosomal protein uL6 family. As to quaternary structure, part of the 50S ribosomal subunit.

This protein binds to the 23S rRNA, and is important in its secondary structure. It is located near the subunit interface in the base of the L7/L12 stalk, and near the tRNA binding site of the peptidyltransferase center. This chain is Large ribosomal subunit protein uL6, found in Ruminiclostridium cellulolyticum (strain ATCC 35319 / DSM 5812 / JCM 6584 / H10) (Clostridium cellulolyticum).